Consider the following 469-residue polypeptide: MYEAVIGLEVHLHLKTRTKMFCGCRADYFGAEPNTHTCPVCLGLPGALPVPNRVAVEHGLRLALALGAEVPERLVFHRKNYFYPDLPKNYQISQYDLPLGRGGSLPLGERRVRIKRLHLEEDAGKSLHLEGRTLLDLNRAGSPLIELVTEPDLKTPEEARLFLQRIQALVQTLGISDASPEEGKLRADVNVSVRRVGEPLGTKVEIKNLNSFKSVQRALEYEIRRQTEILRRGEKVKQATMGFEEGSGKTYPMRTKEEEADYRYFPEPDLPPVAIPRDWLEEVRRSLPELPWEKEARYRALGIKEKDAEVLAYTPSLARFLDQALPLGLASPQALANWLLADVAGLLHERGLRLEETRLSPEGLARLVGLFERGEVTSRVAKSLLPEVLEGQDPEALVRERGLKVVADEGALKALVAEAIAAMPEAAESVRQGKVKALDALVGQVMRKTRGQARPDLVRRLLLEALGVG.

Belongs to the GatB/GatE family. GatB subfamily. As to quaternary structure, heterotrimer of A, B and C subunits.

The catalysed reaction is L-glutamyl-tRNA(Gln) + L-glutamine + ATP + H2O = L-glutaminyl-tRNA(Gln) + L-glutamate + ADP + phosphate + H(+). It catalyses the reaction L-aspartyl-tRNA(Asn) + L-glutamine + ATP + H2O = L-asparaginyl-tRNA(Asn) + L-glutamate + ADP + phosphate + 2 H(+). Its function is as follows. Allows the formation of correctly charged Asn-tRNA(Asn) or Gln-tRNA(Gln) through the transamidation of misacylated Asp-tRNA(Asn) or Glu-tRNA(Gln) in organisms which lack either or both of asparaginyl-tRNA or glutaminyl-tRNA synthetases. The reaction takes place in the presence of glutamine and ATP through an activated phospho-Asp-tRNA(Asn) or phospho-Glu-tRNA(Gln). In Thermus thermophilus (strain ATCC 27634 / DSM 579 / HB8), this protein is Aspartyl/glutamyl-tRNA(Asn/Gln) amidotransferase subunit B.